Here is a 408-residue protein sequence, read N- to C-terminus: Formate-dependent phosphoribosylglycinamide formyltransferase (408 aa).

N(1)-(5-phospho-beta-D-ribosyl)glycinamide contacts are provided by residues 25 to 26 and Glu85; that span reads EL. ATP-binding positions include Arg118, Lys159, 164-169, 199-202, and Glu207; these read SSGKGQ and EAFV. Residues 123 to 318 form the ATP-grasp domain; it reads KLAAEELGLP…EFELHAKAIL (196 aa). The Mg(2+) site is built by Glu277 and Glu289. Residues Asp296, Lys365, and 372–373 each bind N(1)-(5-phospho-beta-D-ribosyl)glycinamide; that span reads RR.

Belongs to the PurK/PurT family. In terms of assembly, homodimer.

It catalyses the reaction N(1)-(5-phospho-beta-D-ribosyl)glycinamide + formate + ATP = N(2)-formyl-N(1)-(5-phospho-beta-D-ribosyl)glycinamide + ADP + phosphate + H(+). The protein operates within purine metabolism; IMP biosynthesis via de novo pathway; N(2)-formyl-N(1)-(5-phospho-D-ribosyl)glycinamide from N(1)-(5-phospho-D-ribosyl)glycinamide (formate route): step 1/1. Functionally, involved in the de novo purine biosynthesis. Catalyzes the transfer of formate to 5-phospho-ribosyl-glycinamide (GAR), producing 5-phospho-ribosyl-N-formylglycinamide (FGAR). Formate is provided by PurU via hydrolysis of 10-formyl-tetrahydrofolate. The sequence is that of Formate-dependent phosphoribosylglycinamide formyltransferase from Corynebacterium glutamicum (strain R).